Reading from the N-terminus, the 1231-residue chain is ATP-dependent RNA helicase DHX30 (1231 aa).

Positions 39 to 65 are disordered; the sequence is PDGLEGARQEDEEEQPPPPGAEEQSTA. DRBM domains lie at 80–148 and 292–359; these read PKNL…CQLF and PKNL…CQKL. In terms of domain architecture, Helicase ATP-binding spans 488 to 656; that stretch reads LSAIEQNPVV…FGGCPVVKVP (169 aa). 501–508 is an ATP binding site; that stretch reads GDTGCGKT. A DEAH box motif is present at residues 603-606; sequence DEVH. The Helicase C-terminal domain occupies 697–870; the sequence is LITDLVLQID…NLVVQAKIHM (174 aa).

The protein belongs to the DEAD box helicase family. DEAH subfamily.

It is found in the cytoplasm. The protein resides in the mitochondrion. The protein localises to the mitochondrion matrix. It localises to the mitochondrion nucleoid. It catalyses the reaction ATP + H2O = ADP + phosphate + H(+). Its function is as follows. RNA-dependent helicase. Plays an important role in the assembly of the mitochondrial large ribosomal subunit. Required for optimal function of the zinc-finger antiviral protein ZC3HAV1. Associates with mitochondrial DNA. Involved in nervous system development and differentiation through its involvement in the up-regulation of a number of genes which are required for neurogenesis, including GSC, NCAM1, neurogenin, and NEUROD. The polypeptide is ATP-dependent RNA helicase DHX30 (DHX30) (Gallus gallus (Chicken)).